The sequence spans 169 residues: ATP synthase subunit b (169 aa).

Residues 26-46 (FFFVLLIFLIVLGVIAKWVVP) form a helical membrane-spanning segment.

The protein belongs to the ATPase B chain family. In terms of assembly, F-type ATPases have 2 components, F(1) - the catalytic core - and F(0) - the membrane proton channel. F(1) has five subunits: alpha(3), beta(3), gamma(1), delta(1), epsilon(1). F(0) has three main subunits: a(1), b(2) and c(10-14). The alpha and beta chains form an alternating ring which encloses part of the gamma chain. F(1) is attached to F(0) by a central stalk formed by the gamma and epsilon chains, while a peripheral stalk is formed by the delta and b chains.

The protein resides in the cell membrane. Functionally, f(1)F(0) ATP synthase produces ATP from ADP in the presence of a proton or sodium gradient. F-type ATPases consist of two structural domains, F(1) containing the extramembraneous catalytic core and F(0) containing the membrane proton channel, linked together by a central stalk and a peripheral stalk. During catalysis, ATP synthesis in the catalytic domain of F(1) is coupled via a rotary mechanism of the central stalk subunits to proton translocation. Component of the F(0) channel, it forms part of the peripheral stalk, linking F(1) to F(0). The polypeptide is ATP synthase subunit b (Mycobacterium sp. (strain JLS)).